The primary structure comprises 211 residues: Guanylate kinase (211 aa).

The Guanylate kinase-like domain occupies 5 to 185 (GLLLILSSPS…AEEQLKMILS (181 aa)). 12–19 (SPSGAGKS) lines the ATP pocket.

Belongs to the guanylate kinase family.

Its subcellular location is the cytoplasm. The catalysed reaction is GMP + ATP = GDP + ADP. Essential for recycling GMP and indirectly, cGMP. The chain is Guanylate kinase from Cereibacter sphaeroides (strain ATCC 17023 / DSM 158 / JCM 6121 / CCUG 31486 / LMG 2827 / NBRC 12203 / NCIMB 8253 / ATH 2.4.1.) (Rhodobacter sphaeroides).